The primary structure comprises 388 residues: Succinate--CoA ligase [ADP-forming] subunit beta (388 aa).

In terms of domain architecture, ATP-grasp spans 9–244 (KQLFAEFGLP…PSQEDKREAH (236 aa)). ATP contacts are provided by residues Lys46, 53-55 (GRG), Glu99, Ser102, and Glu107. Mg(2+) is bound by residues Asn199 and Asp213. Substrate-binding positions include Asn264 and 321–323 (GIV).

Belongs to the succinate/malate CoA ligase beta subunit family. In terms of assembly, heterotetramer of two alpha and two beta subunits. Requires Mg(2+) as cofactor.

The enzyme catalyses succinate + ATP + CoA = succinyl-CoA + ADP + phosphate. The catalysed reaction is GTP + succinate + CoA = succinyl-CoA + GDP + phosphate. It functions in the pathway carbohydrate metabolism; tricarboxylic acid cycle; succinate from succinyl-CoA (ligase route): step 1/1. In terms of biological role, succinyl-CoA synthetase functions in the citric acid cycle (TCA), coupling the hydrolysis of succinyl-CoA to the synthesis of either ATP or GTP and thus represents the only step of substrate-level phosphorylation in the TCA. The beta subunit provides nucleotide specificity of the enzyme and binds the substrate succinate, while the binding sites for coenzyme A and phosphate are found in the alpha subunit. In Vibrio vulnificus (strain CMCP6), this protein is Succinate--CoA ligase [ADP-forming] subunit beta.